Consider the following 120-residue polypeptide: UPF0231 protein YE0706 (120 aa).

It belongs to the UPF0231 family.

The chain is UPF0231 protein YE0706 from Yersinia enterocolitica serotype O:8 / biotype 1B (strain NCTC 13174 / 8081).